Reading from the N-terminus, the 312-residue chain is tRNA-cytidine(32) 2-sulfurtransferase (312 aa).

A PP-loop motif motif is present at residues 39–44 (SGGKDS). Residues cysteine 114, cysteine 117, and cysteine 205 each contribute to the [4Fe-4S] cluster site.

It belongs to the TtcA family. Homodimer. The cofactor is Mg(2+). [4Fe-4S] cluster is required as a cofactor.

The protein resides in the cytoplasm. It carries out the reaction cytidine(32) in tRNA + S-sulfanyl-L-cysteinyl-[cysteine desulfurase] + AH2 + ATP = 2-thiocytidine(32) in tRNA + L-cysteinyl-[cysteine desulfurase] + A + AMP + diphosphate + H(+). Its pathway is tRNA modification. Functionally, catalyzes the ATP-dependent 2-thiolation of cytidine in position 32 of tRNA, to form 2-thiocytidine (s(2)C32). The sulfur atoms are provided by the cysteine/cysteine desulfurase (IscS) system. The protein is tRNA-cytidine(32) 2-sulfurtransferase of Ralstonia nicotianae (strain ATCC BAA-1114 / GMI1000) (Ralstonia solanacearum).